The primary structure comprises 216 residues: Probable succinyl-CoA:3-ketoacid coenzyme A transferase subunit B (216 aa).

Glutamate 47 is a catalytic residue.

This sequence belongs to the 3-oxoacid CoA-transferase subunit B family. As to quaternary structure, heterodimer of a subunit A and a subunit B.

The enzyme catalyses a 3-oxo acid + succinyl-CoA = a 3-oxoacyl-CoA + succinate. The protein is Probable succinyl-CoA:3-ketoacid coenzyme A transferase subunit B (scoB) of Bacillus subtilis (strain 168).